Here is a 1486-residue protein sequence, read N- to C-terminus: Chromosome partition protein MukB (1486 aa).

34–41 (GGNGAGKS) is a binding site for ATP. 3 coiled-coil regions span residues 326–418 (LEAD…QYNQ), 444–480 (LETF…QAYQ), and 509–603 (RHLA…RAPV). The tract at residues 666 to 783 (PGGSEDQRLN…EVPLFGRAAR (118 aa)) is flexible hinge. Coiled coils occupy residues 835–923 (EAEI…AKLE), 977–1115 (EMLS…TAKA), and 1209–1266 (VEAI…QNVS).

The protein belongs to the SMC family. MukB subfamily. Homodimerization via its hinge domain. Binds to DNA via its C-terminal region. Interacts, and probably forms a ternary complex, with MukE and MukF via its C-terminal region. The complex formation is stimulated by calcium or magnesium. Interacts with tubulin-related protein FtsZ.

It is found in the cytoplasm. The protein localises to the nucleoid. Plays a central role in chromosome condensation, segregation and cell cycle progression. Functions as a homodimer, which is essential for chromosome partition. Involved in negative DNA supercoiling in vivo, and by this means organize and compact chromosomes. May achieve or facilitate chromosome segregation by condensation DNA from both sides of a centrally located replisome during cell division. The polypeptide is Chromosome partition protein MukB (Escherichia coli O6:H1 (strain CFT073 / ATCC 700928 / UPEC)).